Here is a 234-residue protein sequence, read N- to C-terminus: Probable septum site-determining protein MinC (234 aa).

The protein belongs to the MinC family. Interacts with MinD and FtsZ.

Cell division inhibitor that blocks the formation of polar Z ring septums. Rapidly oscillates between the poles of the cell to destabilize FtsZ filaments that have formed before they mature into polar Z rings. Prevents FtsZ polymerization. The sequence is that of Probable septum site-determining protein MinC from Pseudoalteromonas translucida (strain TAC 125).